We begin with the raw amino-acid sequence, 330 residues long: 4-hydroxythreonine-4-phosphate dehydrogenase (330 aa).

Substrate is bound at residue threonine 133. 3 residues coordinate a divalent metal cation: histidine 161, histidine 206, and histidine 261. Residues lysine 269, asparagine 278, and arginine 287 each contribute to the substrate site.

This sequence belongs to the PdxA family. As to quaternary structure, homodimer. It depends on Zn(2+) as a cofactor. The cofactor is Mg(2+). Co(2+) is required as a cofactor.

The protein localises to the cytoplasm. The catalysed reaction is 4-(phosphooxy)-L-threonine + NAD(+) = 3-amino-2-oxopropyl phosphate + CO2 + NADH. Its pathway is cofactor biosynthesis; pyridoxine 5'-phosphate biosynthesis; pyridoxine 5'-phosphate from D-erythrose 4-phosphate: step 4/5. In terms of biological role, catalyzes the NAD(P)-dependent oxidation of 4-(phosphooxy)-L-threonine (HTP) into 2-amino-3-oxo-4-(phosphooxy)butyric acid which spontaneously decarboxylates to form 3-amino-2-oxopropyl phosphate (AHAP). The polypeptide is 4-hydroxythreonine-4-phosphate dehydrogenase (Xylella fastidiosa (strain Temecula1 / ATCC 700964)).